The following is a 158-amino-acid chain: Phosphopantetheine adenylyltransferase (158 aa).

Position 10 (Ser-10) interacts with substrate. ATP is bound by residues 10-11 (SF) and His-18. 3 residues coordinate substrate: Lys-42, Leu-74, and Arg-88. ATP is bound by residues 89–91 (GLR), Glu-99, and 124–130 (YANISSS).

The protein belongs to the bacterial CoaD family. Homohexamer. Mg(2+) serves as cofactor.

It is found in the cytoplasm. The catalysed reaction is (R)-4'-phosphopantetheine + ATP + H(+) = 3'-dephospho-CoA + diphosphate. It participates in cofactor biosynthesis; coenzyme A biosynthesis; CoA from (R)-pantothenate: step 4/5. In terms of biological role, reversibly transfers an adenylyl group from ATP to 4'-phosphopantetheine, yielding dephospho-CoA (dPCoA) and pyrophosphate. The protein is Phosphopantetheine adenylyltransferase of Vesicomyosocius okutanii subsp. Calyptogena okutanii (strain HA).